The sequence spans 226 residues: Large ribosomal subunit protein uL3 (226 aa).

Gln-160 carries the post-translational modification N5-methylglutamine.

The protein belongs to the universal ribosomal protein uL3 family. In terms of assembly, part of the 50S ribosomal subunit. Forms a cluster with proteins L14 and L19. Post-translationally, methylated by PrmB.

In terms of biological role, one of the primary rRNA binding proteins, it binds directly near the 3'-end of the 23S rRNA, where it nucleates assembly of the 50S subunit. The chain is Large ribosomal subunit protein uL3 from Leptothrix cholodnii (strain ATCC 51168 / LMG 8142 / SP-6) (Leptothrix discophora (strain SP-6)).